A 257-amino-acid chain; its full sequence is Imidazole glycerol phosphate synthase subunit HisF (257 aa).

Catalysis depends on residues aspartate 11 and aspartate 130.

The protein belongs to the HisA/HisF family. As to quaternary structure, heterodimer of HisH and HisF.

The protein localises to the cytoplasm. The enzyme catalyses 5-[(5-phospho-1-deoxy-D-ribulos-1-ylimino)methylamino]-1-(5-phospho-beta-D-ribosyl)imidazole-4-carboxamide + L-glutamine = D-erythro-1-(imidazol-4-yl)glycerol 3-phosphate + 5-amino-1-(5-phospho-beta-D-ribosyl)imidazole-4-carboxamide + L-glutamate + H(+). The protein operates within amino-acid biosynthesis; L-histidine biosynthesis; L-histidine from 5-phospho-alpha-D-ribose 1-diphosphate: step 5/9. In terms of biological role, IGPS catalyzes the conversion of PRFAR and glutamine to IGP, AICAR and glutamate. The HisF subunit catalyzes the cyclization activity that produces IGP and AICAR from PRFAR using the ammonia provided by the HisH subunit. This is Imidazole glycerol phosphate synthase subunit HisF from Shewanella piezotolerans (strain WP3 / JCM 13877).